We begin with the raw amino-acid sequence, 249 residues long: Proteasome subunit alpha type-3 (249 aa).

Belongs to the peptidase T1A family. In terms of assembly, the 26S proteasome consists of a 20S proteasome core and two 19S regulatory subunits. The 20S proteasome core is composed of 28 subunits that are arranged in four stacked rings, resulting in a barrel-shaped structure. The two end rings are each formed by seven alpha subunits, and the two central rings are each formed by seven beta subunits. The catalytic chamber with the active sites is on the inside of the barrel.

The protein localises to the cytoplasm. The protein resides in the nucleus. In terms of biological role, the proteasome is a multicatalytic proteinase complex which is characterized by its ability to cleave peptides with Arg, Phe, Tyr, Leu, and Glu adjacent to the leaving group at neutral or slightly basic pH. The proteasome has an ATP-dependent proteolytic activity. The chain is Proteasome subunit alpha type-3 (PAG1) from Spinacia oleracea (Spinach).